The following is a 361-amino-acid chain: Molybdenum import ATP-binding protein ModC (361 aa).

Residues 1-228 enclose the ABC transporter domain; that stretch reads MLTINIEKQL…EQMRPWVPLQ (228 aa). ATP is bound at residue 31 to 38; it reads GRSGAGKT. Residues 289-356 enclose the Mop domain; it reads RSSIRNVLKG…IKGVTMTQMD (68 aa).

This sequence belongs to the ABC transporter superfamily. Molybdate importer (TC 3.A.1.8) family. As to quaternary structure, the complex is composed of two ATP-binding proteins (ModC), two transmembrane proteins (ModB) and a solute-binding protein (ModA).

The protein localises to the cell inner membrane. The enzyme catalyses molybdate(out) + ATP + H2O = molybdate(in) + ADP + phosphate + H(+). Part of the ABC transporter complex ModABC involved in molybdenum import. Responsible for energy coupling to the transport system. The chain is Molybdenum import ATP-binding protein ModC from Shewanella oneidensis (strain ATCC 700550 / JCM 31522 / CIP 106686 / LMG 19005 / NCIMB 14063 / MR-1).